We begin with the raw amino-acid sequence, 97 residues long: Large ribosomal subunit protein bL28 (97 aa).

It belongs to the bacterial ribosomal protein bL28 family.

This chain is Large ribosomal subunit protein bL28, found in Bartonella henselae (strain ATCC 49882 / DSM 28221 / CCUG 30454 / Houston 1) (Rochalimaea henselae).